Consider the following 259-residue polypeptide: Ribonuclease HII (259 aa).

The tract at residues 1-26 is disordered; the sequence is MLSTPPKLPSAHGPVHFPRRSGTGMN. The 189-residue stretch at 55 to 243 folds into the RNase H type-2 domain; that stretch reads APVAGADEAG…VRAQQLVLFE (189 aa). A divalent metal cation contacts are provided by D61, E62, and D152.

It belongs to the RNase HII family. Mn(2+) serves as cofactor. It depends on Mg(2+) as a cofactor.

It is found in the cytoplasm. It carries out the reaction Endonucleolytic cleavage to 5'-phosphomonoester.. Its function is as follows. Endonuclease that specifically degrades the RNA of RNA-DNA hybrids. The sequence is that of Ribonuclease HII from Azorhizobium caulinodans (strain ATCC 43989 / DSM 5975 / JCM 20966 / LMG 6465 / NBRC 14845 / NCIMB 13405 / ORS 571).